Reading from the N-terminus, the 359-residue chain is Peptide chain release factor 1 (359 aa).

Q235 is subject to N5-methylglutamine.

The protein belongs to the prokaryotic/mitochondrial release factor family. In terms of processing, methylated by PrmC. Methylation increases the termination efficiency of RF1.

The protein localises to the cytoplasm. Peptide chain release factor 1 directs the termination of translation in response to the peptide chain termination codons UAG and UAA. In Aromatoleum aromaticum (strain DSM 19018 / LMG 30748 / EbN1) (Azoarcus sp. (strain EbN1)), this protein is Peptide chain release factor 1.